A 237-amino-acid chain; its full sequence is Platelet-aggregating proteinase PA-BJ (237 aa).

Residues 1-5 constitute a propeptide that is removed on maturation; that stretch reads NSLVI. The 224-residue stretch at 6–229 folds into the Peptidase S1 domain; it reads VVGGRPCKIN…YLPWIESIIA (224 aa). 6 disulfide bridges follow: Cys-12–Cys-144, Cys-31–Cys-47, Cys-79–Cys-236, Cys-123–Cys-191, Cys-155–Cys-170, and Cys-181–Cys-205. The N-linked (GlcNAc...) asparagine glycan is linked to Asn-25. Residue Ser-28 is glycosylated (O-linked (GalNAc...) serine). Residues His-46 and Asp-91 each act as charge relay system in the active site. Residue Ser-185 is the Charge relay system of the active site.

Belongs to the peptidase S1 family. Snake venom subfamily. Monomer. As to expression, expressed by the venom gland.

It localises to the secreted. Inhibited by PMSF. The amidolytic activity is also inhibited by benzamidine derivatives. Its function is as follows. Snake venom serine protease that induces platelet aggregation through activation of protease-activated platelet receptors (PAR1/F2R and PAR4/F2RL3). On F2R, the cleavage occurs at Arg41-Ser42 (like thrombin cleavage), and Arg46-Asn47. In normal condition of hemostasis, the cleavage of the Arg41-Ser42 bond liberates a new N-terminus that functions as an agonist. However after envenomation, the cleavage of Arg46-Asn47 bond degrades this potential agonist. This may explain why the snake protease is less potent than thrombin in causing platelet aggregation and release reaction. On F2RL3, a thrombin-like activity has also been proven by calcium release from lung fibroblasts transfected with this receptor. Possesses amidolytic activities. The protein is Platelet-aggregating proteinase PA-BJ of Bothrops jararaca (Jararaca).